A 517-amino-acid chain; its full sequence is Putative alpha-L-fucosidase 1 (517 aa).

A signal peptide spans Met-1–Ala-20. N-linked (GlcNAc...) asparagine glycans are attached at residues Asn-119, Asn-249, Asn-296, Asn-321, Asn-352, Asn-496, and Asn-511.

The protein belongs to the glycosyl hydrolase 29 family.

It is found in the secreted. It localises to the extracellular space. The protein resides in the apoplast. It carries out the reaction an alpha-L-fucoside + H2O = L-fucose + an alcohol. Functionally, alpha-L-fucosidase is responsible for hydrolyzing the alpha-1,6-linked fucose joined to the reducing-end N-acetylglucosamine of the carbohydrate moieties of glycoproteins. Active only against 2'-fucosyl-lactitol when heterologously expressed. The chain is Putative alpha-L-fucosidase 1 from Oryza sativa subsp. japonica (Rice).